The chain runs to 120 residues: Nitrogen regulatory protein GlnK1 (120 aa).

ADP-binding positions include Thr40, 48–50 (GEQ), Val75, and 98–101 (GDGR). ATP-binding positions include Thr40, 48-50 (GEQ), Val75, and 98-101 (GDGR).

Belongs to the P(II) protein family. In terms of assembly, homotrimer. Interacts and forms a complex with Amt1.

It is found in the cytoplasm. Its function is as follows. Involved in the regulation of nitrogen metabolism. Regulates the activity of its targets by protein-protein interaction in response to the nitrogen status of the cell. Regulates the activity of the ammonia channel Amt1 via direct interaction. In Archaeoglobus fulgidus (strain ATCC 49558 / DSM 4304 / JCM 9628 / NBRC 100126 / VC-16), this protein is Nitrogen regulatory protein GlnK1.